The primary structure comprises 245 residues: Flavin mononucleotide hydrolase 1, chloroplatic (245 aa).

The transit peptide at 1–26 directs the protein to the chloroplast; it reads MAAAAMHTSAEFINLKPNMWKKNPVR.

It belongs to the HAD-like hydrolase superfamily. DOG/GPP family. Homodimer. Mg(2+) is required as a cofactor.

The protein localises to the plastid. It localises to the chloroplast stroma. It carries out the reaction FMN + H2O = riboflavin + phosphate. The catalysed reaction is 5-amino-6-(5-phospho-D-ribitylamino)uracil + H2O = 5-amino-6-(D-ribitylamino)uracil + phosphate. Functionally, FMN hydrolase that catalyzes the dephosphorylation of flavin mononucleotide (FMN) to riboflavin. Can also dephosphorylate 5-amino-6-(5-phospho-D-ribitylamino)uracil, also known as ARPP. Not required for riboflavin biosynthesis in planta, but may help maintaining flavin homeostasis within chloroplasts. The sequence is that of Flavin mononucleotide hydrolase 1, chloroplatic from Arabidopsis thaliana (Mouse-ear cress).